A 283-amino-acid chain; its full sequence is Phosphatidylserine decarboxylase proenzyme (283 aa).

Residues Asp90, His143, and Ser248 each act as charge relay system; for autoendoproteolytic cleavage activity in the active site. Ser248 (schiff-base intermediate with substrate; via pyruvic acid; for decarboxylase activity) is an active-site residue. Ser248 carries the pyruvic acid (Ser); by autocatalysis modification.

This sequence belongs to the phosphatidylserine decarboxylase family. PSD-B subfamily. Prokaryotic type I sub-subfamily. Heterodimer of a large membrane-associated beta subunit and a small pyruvoyl-containing alpha subunit. Pyruvate serves as cofactor. Post-translationally, is synthesized initially as an inactive proenzyme. Formation of the active enzyme involves a self-maturation process in which the active site pyruvoyl group is generated from an internal serine residue via an autocatalytic post-translational modification. Two non-identical subunits are generated from the proenzyme in this reaction, and the pyruvate is formed at the N-terminus of the alpha chain, which is derived from the carboxyl end of the proenzyme. The autoendoproteolytic cleavage occurs by a canonical serine protease mechanism, in which the side chain hydroxyl group of the serine supplies its oxygen atom to form the C-terminus of the beta chain, while the remainder of the serine residue undergoes an oxidative deamination to produce ammonia and the pyruvoyl prosthetic group on the alpha chain. During this reaction, the Ser that is part of the protease active site of the proenzyme becomes the pyruvoyl prosthetic group, which constitutes an essential element of the active site of the mature decarboxylase.

The protein resides in the cell membrane. It catalyses the reaction a 1,2-diacyl-sn-glycero-3-phospho-L-serine + H(+) = a 1,2-diacyl-sn-glycero-3-phosphoethanolamine + CO2. It participates in phospholipid metabolism; phosphatidylethanolamine biosynthesis; phosphatidylethanolamine from CDP-diacylglycerol: step 2/2. Its function is as follows. Catalyzes the formation of phosphatidylethanolamine (PtdEtn) from phosphatidylserine (PtdSer). The protein is Phosphatidylserine decarboxylase proenzyme of Francisella tularensis subsp. mediasiatica (strain FSC147).